The following is a 436-amino-acid chain: Ribosomal protein uS12 methylthiotransferase RimO (436 aa).

An MTTase N-terminal domain is found at 2 to 117 (RNVGIISLGC…IVDVIEEVKK (116 aa)). [4Fe-4S] cluster contacts are provided by cysteine 11, cysteine 47, cysteine 80, cysteine 154, cysteine 158, and cysteine 161. Residues 140–369 (TTPPYYAYLK…MEIQKQISYE (230 aa)) form the Radical SAM core domain. Residues 372–436 (MSKIGTKLEV…AFEYDLVGEY (65 aa)) enclose the TRAM domain.

The protein belongs to the methylthiotransferase family. RimO subfamily. Requires [4Fe-4S] cluster as cofactor.

It is found in the cytoplasm. It carries out the reaction L-aspartate(89)-[ribosomal protein uS12]-hydrogen + (sulfur carrier)-SH + AH2 + 2 S-adenosyl-L-methionine = 3-methylsulfanyl-L-aspartate(89)-[ribosomal protein uS12]-hydrogen + (sulfur carrier)-H + 5'-deoxyadenosine + L-methionine + A + S-adenosyl-L-homocysteine + 2 H(+). Catalyzes the methylthiolation of an aspartic acid residue of ribosomal protein uS12. The sequence is that of Ribosomal protein uS12 methylthiotransferase RimO from Caldanaerobacter subterraneus subsp. tengcongensis (strain DSM 15242 / JCM 11007 / NBRC 100824 / MB4) (Thermoanaerobacter tengcongensis).